The primary structure comprises 157 residues: Ribosomal RNA large subunit methyltransferase H (157 aa).

S-adenosyl-L-methionine contacts are provided by residues glycine 104 and 123-128; that span reads LSSLTL.

This sequence belongs to the RNA methyltransferase RlmH family. Homodimer.

The protein localises to the cytoplasm. The catalysed reaction is pseudouridine(1915) in 23S rRNA + S-adenosyl-L-methionine = N(3)-methylpseudouridine(1915) in 23S rRNA + S-adenosyl-L-homocysteine + H(+). Functionally, specifically methylates the pseudouridine at position 1915 (m3Psi1915) in 23S rRNA. This is Ribosomal RNA large subunit methyltransferase H from Nitrosococcus oceani (strain ATCC 19707 / BCRC 17464 / JCM 30415 / NCIMB 11848 / C-107).